Here is a 576-residue protein sequence, read N- to C-terminus: Zinc finger protein 791 (576 aa).

One can recognise a KRAB domain in the interval 4–90; that stretch reads VAFEDVSVSF…AENFSPNLSV (87 aa). 17 C2H2-type zinc fingers span residues 100 to 122, 132 to 154, 160 to 182, 188 to 210, 216 to 238, 244 to 266, 272 to 294, 300 to 322, 328 to 350, 356 to 378, 384 to 406, 412 to 434, 440 to 462, 468 to 490, 496 to 518, 524 to 546, and 552 to 574; these read YECTICGKAFMRLSSLTRHMRSH, YKCKECEKAFSYLKSFQRHERSH, YKCKQCGKTFIYHQPFQRHERTH, YECKQCGKALSCSSSLRVHERIH, YECKQCGKAFSCSSSIRVHERTH, YACKECGKAFISHTSVLTHMITH, YKCKECGKAFIFPSFLRVHERIH, YKCKQCGKAFRCSTSIQIHERIH, YKCKECGKSFSARPAFRVHVRVH, YKCKECGKAFSRISYFRIHERTH, YECKKCGKTFNYPLDLKIHKRNH, YECKECAKTFISLENFRRHMITH, YKCRDCGKVFIFPSALRTHERTH, YECKQCGKAFSCSSYIRIHKRTH, YECKECGKAFIYPTSFQGHMRMH, YKCKECGKAFSLHSSFQRHTRIH, and LECKQCGKAFSVSTSLKKHMRMH.

This sequence belongs to the krueppel C2H2-type zinc-finger protein family.

It localises to the nucleus. May be involved in transcriptional regulation. The chain is Zinc finger protein 791 (ZNF791) from Homo sapiens (Human).